The chain runs to 178 residues: Large ribosomal subunit protein uL6 (178 aa).

Belongs to the universal ribosomal protein uL6 family. As to quaternary structure, part of the 50S ribosomal subunit.

In terms of biological role, this protein binds to the 23S rRNA, and is important in its secondary structure. It is located near the subunit interface in the base of the L7/L12 stalk, and near the tRNA binding site of the peptidyltransferase center. The sequence is that of Large ribosomal subunit protein uL6 from Micrococcus luteus (Micrococcus lysodeikticus).